Consider the following 447-residue polypeptide: Tubulin beta-1 chain (447 aa).

GTP contacts are provided by Q11, E69, S138, G142, T143, G144, N204, and N226. Position 69 (E69) interacts with Mg(2+). The disordered stretch occupies residues 428–447; it reads ATADEDAEFDEEQEQEIEDN. Positions 429 to 447 are enriched in acidic residues; the sequence is TADEDAEFDEEQEQEIEDN.

Belongs to the tubulin family. Dimer of alpha and beta chains. A typical microtubule is a hollow water-filled tube with an outer diameter of 25 nm and an inner diameter of 15 nM. Alpha-beta heterodimers associate head-to-tail to form protofilaments running lengthwise along the microtubule wall with the beta-tubulin subunit facing the microtubule plus end conferring a structural polarity. Microtubules usually have 13 protofilaments but different protofilament numbers can be found in some organisms and specialized cells. Requires Mg(2+) as cofactor.

It is found in the cytoplasm. Its subcellular location is the cytoskeleton. Tubulin is the major constituent of microtubules, a cylinder consisting of laterally associated linear protofilaments composed of alpha- and beta-tubulin heterodimers. Microtubules grow by the addition of GTP-tubulin dimers to the microtubule end, where a stabilizing cap forms. Below the cap, tubulin dimers are in GDP-bound state, owing to GTPase activity of alpha-tubulin. This is Tubulin beta-1 chain from Manduca sexta (Tobacco hawkmoth).